Here is a 184-residue protein sequence, read N- to C-terminus: Photosystem I assembly protein Ycf4 (184 aa).

2 helical membrane-spanning segments follow: residues 21-43 (NFFWAFILILGALGFLLVGSSSY) and 58-80 (VFIPQGIVMCFYGIAGISIGFYL).

Belongs to the Ycf4 family.

The protein localises to the plastid. It localises to the chloroplast thylakoid membrane. Functionally, seems to be required for the assembly of the photosystem I complex. The protein is Photosystem I assembly protein Ycf4 of Psilotum nudum (Whisk fern).